The primary structure comprises 404 residues: Glucose-1-phosphate adenylyltransferase (404 aa).

Alpha-D-glucose 1-phosphate contacts are provided by residues tyrosine 99, glycine 164, 179–180, and serine 197; that span reads EK.

This sequence belongs to the bacterial/plant glucose-1-phosphate adenylyltransferase family.

It carries out the reaction alpha-D-glucose 1-phosphate + ATP + H(+) = ADP-alpha-D-glucose + diphosphate. It functions in the pathway glycan biosynthesis; glycogen biosynthesis. Involved in the biosynthesis of ADP-glucose building block, required in the biosynthesis of maltose-1-phosphate (M1P) and in the elongation reactions to produce linear alpha-1,4-glucans. Catalyzes the reaction between ATP and alpha-D-glucose 1-phosphate (G1P) to produce pyrophosphate and ADP-Glc. This Mycolicibacterium smegmatis (strain ATCC 700084 / mc(2)155) (Mycobacterium smegmatis) protein is Glucose-1-phosphate adenylyltransferase.